A 409-amino-acid chain; its full sequence is tRNA-specific 2-thiouridylase MnmA (409 aa).

ATP contacts are provided by residues 43–50 (AMSGGVDS) and Leu69. The Nucleophile role is filled by Cys137. Cys137 and Cys235 are disulfide-bonded. Gly161 lines the ATP pocket. The interval 185-187 (KDQ) is interaction with tRNA. The active-site Cysteine persulfide intermediate is Cys235.

Belongs to the MnmA/TRMU family.

Its subcellular location is the cytoplasm. It carries out the reaction S-sulfanyl-L-cysteinyl-[protein] + uridine(34) in tRNA + AH2 + ATP = 2-thiouridine(34) in tRNA + L-cysteinyl-[protein] + A + AMP + diphosphate + H(+). In terms of biological role, catalyzes the 2-thiolation of uridine at the wobble position (U34) of tRNA, leading to the formation of s(2)U34. In Caulobacter sp. (strain K31), this protein is tRNA-specific 2-thiouridylase MnmA.